The chain runs to 376 residues: Beta-centractin (376 aa).

At methionine 1 the chain carries N-acetylmethionine. A 3'-nitrotyrosine modification is found at tyrosine 4.

This sequence belongs to the actin family. ARP1 subfamily.

It localises to the cytoplasm. Its subcellular location is the cytoskeleton. It is found in the microtubule organizing center. The protein localises to the centrosome. Its function is as follows. Component of a multi-subunit complex involved in microtubule based vesicle motility. It is associated with the centrosome. The protein is Beta-centractin (Actr1b) of Mus musculus (Mouse).